The primary structure comprises 1400 residues: DNA topoisomerase 2 (1400 aa).

Residues 1–30 (MSSFESDSASDAESAFSDASSDFTPSSSVK) show a composition bias toward low complexity. Residues 1–57 (MSSFESDSASDAESAFSDASSDFTPSSSVKSKGKVPLRDSTNTTAQPSAPATGDASD) form a disordered region. Over residues 39-57 (DSTNTTAQPSAPATGDASD) the composition is skewed to polar residues. ATP-binding positions include asparagine 117, asparagine 146, 174 to 176 (SSN), and 187 to 194 (GRNGYGAK). The interaction with DNA stretch occupies residues 379–386 (TKKEKGKK). 415–417 (QTK) is a binding site for ATP. The Toprim domain maps to 497 to 613 (CTLILTEGDS…GLLEIPGFLL (117 aa)). 3 residues coordinate Mg(2+): glutamate 503, aspartate 582, and aspartate 584. Residues 749–1214 (IPSILDGFKP…SAKDLWNSDL (466 aa)) enclose the Topo IIA-type catalytic domain. Residue tyrosine 839 is the O-(5'-phospho-DNA)-tyrosine intermediate of the active site. Positions 1019 to 1028 (KLISSISLSN) are interaction with DNA. Residues 1235–1400 (FGPTAKTSTR…NESDEDYMSE (166 aa)) form a disordered region. Residues 1262–1271 (SSTPKASTPT) are compositionally biased toward low complexity. Residues 1312–1321 (PKRKTPKSKP) show a composition bias toward basic residues. Residues 1389–1400 (DGNESDEDYMSE) show a composition bias toward acidic residues.

It belongs to the type II topoisomerase family. In terms of assembly, homodimer. It depends on Mg(2+) as a cofactor. Mn(2+) serves as cofactor. Ca(2+) is required as a cofactor.

The protein localises to the nucleus. The catalysed reaction is ATP-dependent breakage, passage and rejoining of double-stranded DNA.. In terms of biological role, control of topological states of DNA by transient breakage and subsequent rejoining of DNA strands. Topoisomerase II makes double-strand breaks. This is DNA topoisomerase 2 (TOP2) from Meyerozyma guilliermondii (strain ATCC 6260 / CBS 566 / DSM 6381 / JCM 1539 / NBRC 10279 / NRRL Y-324) (Yeast).